A 464-amino-acid chain; its full sequence is Cysteine--tRNA ligase (464 aa).

Residue C28 coordinates Zn(2+). Residues I30–H40 carry the 'HIGH' region motif. Residues C210, H235, and E239 each coordinate Zn(2+). Residues K267–S271 carry the 'KMSKS' region motif. K270 provides a ligand contact to ATP.

It belongs to the class-I aminoacyl-tRNA synthetase family. In terms of assembly, monomer. It depends on Zn(2+) as a cofactor.

The protein resides in the cytoplasm. The catalysed reaction is tRNA(Cys) + L-cysteine + ATP = L-cysteinyl-tRNA(Cys) + AMP + diphosphate. The chain is Cysteine--tRNA ligase from Buchnera aphidicola subsp. Baizongia pistaciae (strain Bp).